A 311-amino-acid polypeptide reads, in one-letter code: Tricarboxylate transport protein, mitochondrial (311 aa).

The propeptide at 1 to 13 (MAAPRAPRALTAA) is removed in mature form. Solcar repeat units follow at residues 23 to 111 (THPG…LSNH), 122 to 208 (RRGL…LRNW), and 218 to 303 (MNPL…VVKL). A run of 3 helical transmembrane segments spans residues 29–46 (ILAG…TFPT), 86–105 (GLSS…FGMF), and 129–143 (LGAG…VCPM). Ser156 carries the phosphoserine modification. Helical transmembrane passes span 183–202 (GLTA…FFVM), 224–241 (GVFG…NTPL), and 278–297 (GTVP…FVIY).

This sequence belongs to the mitochondrial carrier (TC 2.A.29) family. In terms of processing, possesses a short cleavable presequence, which, however, is found to be dispensable both for targeting to mitochondria and insertion into the inner membrane. However, the presequence is required to keep SLC25A1 in a soluble state and thus in an import-competent state. Mature SLC25A1 lacking the presequence is prone to aggregation.

Its subcellular location is the mitochondrion inner membrane. The catalysed reaction is (S)-malate(in) + citrate(out) = (S)-malate(out) + citrate(in). It catalyses the reaction citrate(out) + succinate(in) = citrate(in) + succinate(out). It carries out the reaction D-threo-isocitrate(in) + citrate(out) = D-threo-isocitrate(out) + citrate(in). The enzyme catalyses cis-aconitate(in) + citrate(out) = cis-aconitate(out) + citrate(in). The catalysed reaction is trans-aconitate(in) + citrate(out) = trans-aconitate(out) + citrate(in). It catalyses the reaction phosphoenolpyruvate(in) + citrate(out) = phosphoenolpyruvate(out) + citrate(in). It carries out the reaction maleate(in) + citrate(out) = maleate(out) + citrate(in). Mitochondrial electroneutral antiporter that exports citrate from the mitochondria into the cytosol in exchange for malate. Also able to mediate the exchange of citrate for isocitrate, phosphoenolpyruvate, cis-aconitate and to a lesser extent trans-aconitate, maleate and succinate. In the cytoplasm, citrate plays important roles in fatty acid and sterol synthesis, regulation of glycolysis, protein acetylation, and other physiopathological processes. This is Tricarboxylate transport protein, mitochondrial (Slc25a1) from Rattus norvegicus (Rat).